The following is a 446-amino-acid chain: tRNA modification GTPase MnmE (446 aa).

(6S)-5-formyl-5,6,7,8-tetrahydrofolate contacts are provided by R22, E80, and K119. The region spanning 215-370 (GLSLVIAGRP…LKKVIKQVVG (156 aa)) is the TrmE-type G domain. Residue N225 participates in K(+) binding. GTP-binding positions include 225–230 (NAGKST), 244–250 (TEIAGTT), and 269–272 (DTAG). S229 contributes to the Mg(2+) binding site. Residues T244, I246, and T249 each coordinate K(+). Residue T250 coordinates Mg(2+). K446 provides a ligand contact to (6S)-5-formyl-5,6,7,8-tetrahydrofolate.

Belongs to the TRAFAC class TrmE-Era-EngA-EngB-Septin-like GTPase superfamily. TrmE GTPase family. Homodimer. Heterotetramer of two MnmE and two MnmG subunits. It depends on K(+) as a cofactor.

It is found in the cytoplasm. Functionally, exhibits a very high intrinsic GTPase hydrolysis rate. Involved in the addition of a carboxymethylaminomethyl (cmnm) group at the wobble position (U34) of certain tRNAs, forming tRNA-cmnm(5)s(2)U34. This chain is tRNA modification GTPase MnmE, found in Legionella pneumophila (strain Paris).